Consider the following 820-residue polypeptide: Leucine--tRNA ligase (820 aa).

Residues 40–51 carry the 'HIGH' region motif; the sequence is PYPSGAGLHVGH. The 'KMSKS' region motif lies at 601–605; that stretch reads KMSKS. ATP is bound at residue lysine 604.

This sequence belongs to the class-I aminoacyl-tRNA synthetase family.

The protein localises to the cytoplasm. It carries out the reaction tRNA(Leu) + L-leucine + ATP = L-leucyl-tRNA(Leu) + AMP + diphosphate. The polypeptide is Leucine--tRNA ligase (Chlamydia abortus (strain DSM 27085 / S26/3) (Chlamydophila abortus)).